The chain runs to 89 residues: Probable Fe(2+)-trafficking protein (89 aa).

This sequence belongs to the Fe(2+)-trafficking protein family.

Could be a mediator in iron transactions between iron acquisition and iron-requiring processes, such as synthesis and/or repair of Fe-S clusters in biosynthetic enzymes. This chain is Probable Fe(2+)-trafficking protein, found in Hahella chejuensis (strain KCTC 2396).